The sequence spans 888 residues: Molybdenum cofactor sulfurase (888 aa).

Ser-34 carries the phosphoserine modification. At Lys-264 the chain carries N6-(pyridoxal phosphate)lysine. The active site involves Cys-424. A phosphoserine mark is found at Ser-528 and Ser-530. The MOSC domain maps to 706–867 (KQSSNSQRNA…LSVGSQVLPV (162 aa)).

It belongs to the class-V pyridoxal-phosphate-dependent aminotransferase family. MOCOS subfamily. Requires pyridoxal 5'-phosphate as cofactor.

It carries out the reaction Mo-molybdopterin + L-cysteine + AH2 = thio-Mo-molybdopterin + L-alanine + A + H2O. The protein operates within cofactor biosynthesis; molybdopterin biosynthesis. Sulfurates the molybdenum cofactor. Sulfation of molybdenum is essential for xanthine dehydrogenase (XDH) and aldehyde oxidase (ADO) enzymes in which molybdenum cofactor is liganded by 1 oxygen and 1 sulfur atom in active form. In vitro, the C-terminal domain is able to reduce N-hydroxylated prodrugs, such as benzamidoxime. The sequence is that of Molybdenum cofactor sulfurase from Homo sapiens (Human).